The following is a 137-amino-acid chain: Large ribosomal subunit protein uL16 (137 aa).

The protein belongs to the universal ribosomal protein uL16 family. Part of the 50S ribosomal subunit.

Binds 23S rRNA and is also seen to make contacts with the A and possibly P site tRNAs. The sequence is that of Large ribosomal subunit protein uL16 from Pseudomonas paraeruginosa (strain DSM 24068 / PA7) (Pseudomonas aeruginosa (strain PA7)).